Consider the following 147-residue polypeptide: Globin (147 aa).

Positions 1 to 147 constitute a Globin domain; sequence GLDGAQKTAL…LLTMLIKAHV (147 aa). Residues histidine 66 and histidine 98 each coordinate heme b.

This sequence belongs to the globin family. In terms of assembly, homodimer.

It is found in the cytoplasm. The sequence is that of Globin from Busycotypus canaliculatus (Channeled whelk).